We begin with the raw amino-acid sequence, 1111 residues long: Lon protease homolog, mitochondrial (1111 aa).

The N-terminal 21 residues, 1 to 21, are a transit peptide targeting the mitochondrion; that stretch reads MLRSSRSRLVTRNILLRQFKN. Disordered regions lie at residues 85-177 and 288-311; these read IQLK…AKQP and PPTSEQNLKDESDVSKSEGVENNE. Residues 88–125 are compositionally biased toward basic and acidic residues; the sequence is KQDDKGKDIDQPESENRKKEEEQVPTEEKDNDTAKESE. The segment covering 126-135 has biased composition (polar residues); sequence TSQQRDSVAE. The span at 145 to 167 shows a compositional bias: gly residues; it reads GASGNGESSGNGSGDDGNNGSGN. One can recognise a Lon N-terminal domain in the interval 185–450; it reads VMALPISRRP…KALTVLKKEL (266 aa). Residues 294 to 306 show a composition bias toward basic and acidic residues; the sequence is NLKDESDVSKSEG. 602 to 609 is an ATP binding site; it reads GPPGVGKT. 2 stretches are compositionally biased toward basic and acidic residues: residues 819-835 and 853-865; these read ENEEVKDQKDIKVKQSE and ELIKTQKSHDNKG. Residues 819 to 866 form a disordered region; the sequence is ENEEVKDQKDIKVKQSENKSSAEASTVESTTEENELIKTQKSHDNKGS. The 187-residue stretch at 899 to 1085 folds into the Lon proteolytic domain; that stretch reads STPPGVVMGL…EDVFQRLFGD (187 aa). Active-site residues include Ser-991 and Lys-1034.

This sequence belongs to the peptidase S16 family. In terms of assembly, homohexamer or homoheptamer. Organized in a ring with a central cavity.

The protein resides in the mitochondrion matrix. It carries out the reaction Hydrolysis of proteins in presence of ATP.. ATP-dependent serine protease that mediates the selective degradation of misfolded, unassembled or oxidatively damaged polypeptides as well as certain short-lived regulatory proteins in the mitochondrial matrix. May also have a chaperone function in the assembly of inner membrane protein complexes. Participates in the regulation of mitochondrial gene expression and in the maintenance of the integrity of the mitochondrial genome. Binds to mitochondrial DNA in a site-specific manner. The sequence is that of Lon protease homolog, mitochondrial from Kluyveromyces lactis (strain ATCC 8585 / CBS 2359 / DSM 70799 / NBRC 1267 / NRRL Y-1140 / WM37) (Yeast).